The chain runs to 189 residues: Acireductone dioxygenase 1 (189 aa).

Fe(2+) is bound by residues His-102, His-104, Glu-108, and His-146. Ni(2+) contacts are provided by His-102, His-104, Glu-108, and His-146.

It belongs to the acireductone dioxygenase (ARD) family. In terms of assembly, monomer. The cofactor is Fe(2+). It depends on Ni(2+) as a cofactor.

The catalysed reaction is 1,2-dihydroxy-5-(methylsulfanyl)pent-1-en-3-one + O2 = 3-(methylsulfanyl)propanoate + CO + formate + 2 H(+). It catalyses the reaction 1,2-dihydroxy-5-(methylsulfanyl)pent-1-en-3-one + O2 = 4-methylsulfanyl-2-oxobutanoate + formate + 2 H(+). Its pathway is amino-acid biosynthesis; L-methionine biosynthesis via salvage pathway; L-methionine from S-methyl-5-thio-alpha-D-ribose 1-phosphate: step 5/6. Functionally, catalyzes 2 different reactions between oxygen and the acireductone 1,2-dihydroxy-3-keto-5-methylthiopentene (DHK-MTPene) depending upon the metal bound in the active site. Fe-containing acireductone dioxygenase (Fe-ARD) produces formate and 2-keto-4-methylthiobutyrate (KMTB), the alpha-ketoacid precursor of methionine in the methionine recycle pathway. Ni-containing acireductone dioxygenase (Ni-ARD) produces methylthiopropionate, carbon monoxide and formate, and does not lie on the methionine recycle pathway. The protein is Acireductone dioxygenase 1 of Nocardia farcinica (strain IFM 10152).